The sequence spans 351 residues: Cell division protein FtsZ (351 aa).

GTP contacts are provided by residues 31 to 35 (GAGNN), 118 to 120 (GTG), Glu-149, Arg-153, and Asp-197.

This sequence belongs to the FtsZ family. In terms of assembly, homodimer. Polymerizes to form a dynamic ring structure in a strictly GTP-dependent manner. Interacts directly with several other division proteins. Interacts with FtsA.

It is found in the cytoplasm. In terms of biological role, essential cell division protein that forms a contractile ring structure (Z ring) at the future cell division site. The regulation of the ring assembly controls the timing and the location of cell division. One of the functions of the FtsZ ring is to recruit other cell division proteins to the septum to produce a new cell wall between the dividing cells. Binds GTP and shows GTPase activity. This Thermotoga maritima (strain ATCC 43589 / DSM 3109 / JCM 10099 / NBRC 100826 / MSB8) protein is Cell division protein FtsZ.